A 464-amino-acid chain; its full sequence is Siroheme synthase (464 aa).

Positions 1–203 (MEFLPLFHNL…GQGDEAERLL (203 aa)) are precorrin-2 dehydrogenase /sirohydrochlorin ferrochelatase. NAD(+) is bound by residues 22-23 (EI) and 43-44 (PQ). S128 carries the post-translational modification Phosphoserine. The interval 216 to 464 (GEVYLVGAGP…KWFEGAQSQV (249 aa)) is uroporphyrinogen-III C-methyltransferase. An S-adenosyl-L-methionine-binding site is contributed by P225. The active-site Proton acceptor is the D248. Catalysis depends on K270, which acts as the Proton donor. S-adenosyl-L-methionine is bound by residues 301-303 (GGD), I306, 331-332 (TA), M383, and G412.

In the N-terminal section; belongs to the precorrin-2 dehydrogenase / sirohydrochlorin ferrochelatase family. This sequence in the C-terminal section; belongs to the precorrin methyltransferase family.

The catalysed reaction is uroporphyrinogen III + 2 S-adenosyl-L-methionine = precorrin-2 + 2 S-adenosyl-L-homocysteine + H(+). It catalyses the reaction precorrin-2 + NAD(+) = sirohydrochlorin + NADH + 2 H(+). It carries out the reaction siroheme + 2 H(+) = sirohydrochlorin + Fe(2+). It participates in cofactor biosynthesis; adenosylcobalamin biosynthesis; precorrin-2 from uroporphyrinogen III: step 1/1. Its pathway is cofactor biosynthesis; adenosylcobalamin biosynthesis; sirohydrochlorin from precorrin-2: step 1/1. It functions in the pathway porphyrin-containing compound metabolism; siroheme biosynthesis; precorrin-2 from uroporphyrinogen III: step 1/1. The protein operates within porphyrin-containing compound metabolism; siroheme biosynthesis; siroheme from sirohydrochlorin: step 1/1. It participates in porphyrin-containing compound metabolism; siroheme biosynthesis; sirohydrochlorin from precorrin-2: step 1/1. Its function is as follows. Multifunctional enzyme that catalyzes the SAM-dependent methylations of uroporphyrinogen III at position C-2 and C-7 to form precorrin-2 via precorrin-1. Then it catalyzes the NAD-dependent ring dehydrogenation of precorrin-2 to yield sirohydrochlorin. Finally, it catalyzes the ferrochelation of sirohydrochlorin to yield siroheme. This chain is Siroheme synthase, found in Pseudomonas fluorescens (strain SBW25).